A 467-amino-acid polypeptide reads, in one-letter code: Dimethylamine methyltransferase MtbB2 (467 aa).

Pyrrolysine 356 is a non-standard amino acid (pyrrolysine).

The protein belongs to the dimethylamine methyltransferase family.

It carries out the reaction Co(I)-[dimethylamine-specific corrinoid protein] + dimethylamine + H(+) = methyl-Co(III)-[dimethylamine-specific corrinoid protein] + methylamine. It functions in the pathway one-carbon metabolism; methanogenesis from dimethylamine. Its function is as follows. Catalyzes the transfer of a methyl group from dimethylamine to the corrinoid cofactor of MtbC. The chain is Dimethylamine methyltransferase MtbB2 (mtbB2) from Methanosarcina barkeri (strain Fusaro / DSM 804).